The chain runs to 1028 residues: Exportin-T (1028 aa).

Belongs to the exportin family.

Its subcellular location is the nucleus. It localises to the cytoplasm. Its function is as follows. tRNA nucleus export receptor which facilitates tRNA translocation across the nuclear pore complex. Involved in pre-tRNA splicing, probably by affecting the interaction of pre-tRNA with splicing endonuclease. This is Exportin-T (los1) from Aspergillus terreus (strain NIH 2624 / FGSC A1156).